A 189-amino-acid polypeptide reads, in one-letter code: Ras-like protein rasG (189 aa).

10 to 17 (GGGGVGKS) contributes to the GTP binding site. Residues 32 to 40 (YDPTIEDSY) carry the Effector region motif. GTP is bound by residues 57–61 (DTAGQ) and 116–119 (NKCD). The tract at residues 169 to 189 (KGDSKPEKGKKKRPLKACTLL) is disordered. Cys-186 bears the Cysteine methyl ester mark. Cys-186 carries S-geranylgeranyl cysteine lipidation. Residues 187-189 (TLL) constitute a propeptide, removed in mature form.

The protein belongs to the small GTPase superfamily. Ras family. Interacts with ripA.

Its subcellular location is the cell membrane. It carries out the reaction GTP + H2O = GDP + phosphate + H(+). Alternates between an inactive form bound to GDP and an active form bound to GTP. Activated by a guanine nucleotide-exchange factor (GEF) and inactivated by a GTPase-activating protein (GAP). In terms of biological role, ras proteins bind GDP/GTP and possess intrinsic GTPase activity. The sequence is that of Ras-like protein rasG (rasG) from Dictyostelium discoideum (Social amoeba).